We begin with the raw amino-acid sequence, 355 residues long: Protein RecA (355 aa).

67–74 (GPESSGKT) serves as a coordination point for ATP.

It belongs to the RecA family.

Its subcellular location is the cytoplasm. Its function is as follows. Can catalyze the hydrolysis of ATP in the presence of single-stranded DNA, the ATP-dependent uptake of single-stranded DNA by duplex DNA, and the ATP-dependent hybridization of homologous single-stranded DNAs. It interacts with LexA causing its activation and leading to its autocatalytic cleavage. The sequence is that of Protein RecA from Shewanella baltica (strain OS195).